A 252-amino-acid chain; its full sequence is F-box/SPRY domain-containing protein 1 (252 aa).

Positions 1–48 constitute an F-box domain; the sequence is MVDPLCNYNVLESIFSYLELNDLNRCSQVCKSWYHFLNDENSDVWRWH. Positions 58–250 constitute a B30.2/SPRY domain; it reads VKSDLLSSVT…VSMVYLGTPL (193 aa).

Belongs to the FBXO45/Fsn family. Component of an E3 ubiquitin ligase complex composed of hiw and Fsn.

It localises to the synapse. Its pathway is protein modification; protein ubiquitination. Required in the presynaptic motoneuron to down-regulate the levels of wnd and restrain synaptic terminal growth at the neuromuscular junction (NMJ). The protein is F-box/SPRY domain-containing protein 1 of Drosophila grimshawi (Hawaiian fruit fly).